Reading from the N-terminus, the 101-residue chain is Small ribosomal subunit protein uS14 (101 aa).

The protein belongs to the universal ribosomal protein uS14 family. In terms of assembly, part of the 30S ribosomal subunit. Contacts proteins S3 and S10.

In terms of biological role, binds 16S rRNA, required for the assembly of 30S particles and may also be responsible for determining the conformation of the 16S rRNA at the A site. The protein is Small ribosomal subunit protein uS14 of Burkholderia mallei (strain NCTC 10247).